The primary structure comprises 301 residues: Probable alpha-L-glutamate ligase (301 aa).

The ATP-grasp domain occupies 104-287; sequence LQLLSRKGIG…VADMIFEFIE (184 aa). ATP contacts are provided by residues Lys-141, 178 to 179, Asp-187, and 211 to 213; these read EF and RSN. Mg(2+) is bound by residues Asp-248, Glu-260, and Asn-262. Asp-248, Glu-260, and Asn-262 together coordinate Mn(2+).

Belongs to the RimK family. Mg(2+) is required as a cofactor. It depends on Mn(2+) as a cofactor.

The protein is Probable alpha-L-glutamate ligase of Vibrio atlanticus (strain LGP32) (Vibrio splendidus (strain Mel32)).